The sequence spans 415 residues: L-cysteine:1D-myo-inositol 2-amino-2-deoxy-alpha-D-glucopyranoside ligase (415 aa).

Residue Cys-43 participates in Zn(2+) binding. Residues 43–46, Thr-58, and 81–83 each bind L-cysteinyl-5'-AMP; these read CGIT and NIT. The short motif at 45-55 is the 'HIGH' region element; it reads ITPYDATHLGH. The 'ERGGDP' region motif lies at 187–192; that stretch reads ERGGDP. Trp-227 lines the L-cysteinyl-5'-AMP pocket. Zn(2+) is bound at residue Cys-231. L-cysteinyl-5'-AMP is bound at residue 249–251; that stretch reads GSD. His-256 is a Zn(2+) binding site. Ile-283 serves as a coordination point for L-cysteinyl-5'-AMP. The short motif at 289–293 is the 'KMSKS' region element; the sequence is KMSKS.

It belongs to the class-I aminoacyl-tRNA synthetase family. MshC subfamily. In terms of assembly, monomer. Zn(2+) is required as a cofactor.

The enzyme catalyses 1D-myo-inositol 2-amino-2-deoxy-alpha-D-glucopyranoside + L-cysteine + ATP = 1D-myo-inositol 2-(L-cysteinylamino)-2-deoxy-alpha-D-glucopyranoside + AMP + diphosphate + H(+). In terms of biological role, catalyzes the ATP-dependent condensation of GlcN-Ins and L-cysteine to form L-Cys-GlcN-Ins. The polypeptide is L-cysteine:1D-myo-inositol 2-amino-2-deoxy-alpha-D-glucopyranoside ligase (Mycobacterium sp. (strain JLS)).